We begin with the raw amino-acid sequence, 795 residues long: Phenylalanine--tRNA ligase beta subunit (795 aa).

In terms of domain architecture, tRNA-binding spans 39–148; the sequence is AAEFNGVVIG…LDAPLGTDLR (110 aa). The region spanning 401–476 is the B5 domain; that stretch reads PKPAQILLRR…RIYGYNNIPN (76 aa). Asp454, Asp460, Glu463, and Glu464 together coordinate Mg(2+). An FDX-ACB domain is found at 701-794; it reads SKFPANRRDI…LKTEFNASLR (94 aa).

This sequence belongs to the phenylalanyl-tRNA synthetase beta subunit family. Type 1 subfamily. In terms of assembly, tetramer of two alpha and two beta subunits. It depends on Mg(2+) as a cofactor.

It localises to the cytoplasm. It catalyses the reaction tRNA(Phe) + L-phenylalanine + ATP = L-phenylalanyl-tRNA(Phe) + AMP + diphosphate + H(+). The polypeptide is Phenylalanine--tRNA ligase beta subunit (Shewanella oneidensis (strain ATCC 700550 / JCM 31522 / CIP 106686 / LMG 19005 / NCIMB 14063 / MR-1)).